We begin with the raw amino-acid sequence, 371 residues long: Zinc transporter ZIP13 (371 aa).

Residues methionine 1–proline 7 are Lumenal-facing. Residues glycine 8–glutamate 28 form a helical membrane-spanning segment. The Cytoplasmic segment spans residues arginine 29–tryptophan 68. The chain crosses the membrane as a helical span at residues isoleucine 69–isoleucine 89. The Lumenal segment spans residues proline 90–glutamine 108. A helical membrane pass occupies residues leucine 109–alanine 129. The Cytoplasmic segment spans residues tryptophan 130–glutamine 149. The helical transmembrane segment at glutamine 150–leucine 170 threads the bilayer. The Lumenal portion of the chain corresponds to aspartate 171–alanine 235. A helical membrane pass occupies residues valine 236–leucine 256. The short motif at histidine 257 to glutamate 262 is the XEXPHE-motif element. At histidine 257 to serine 278 the chain is on the cytoplasmic side. Residues alanine 279 to cysteine 299 traverse the membrane as a helical segment. Topologically, residues threonine 300–threonine 316 are lumenal. Residues alanine 317–leucine 337 form a helical membrane-spanning segment. At proline 338–serine 349 the chain is on the cytoplasmic side. Residues leucine 350–valine 370 form a helical membrane-spanning segment. Aspartate 371 is a topological domain (lumenal).

The protein belongs to the ZIP transporter (TC 2.A.5) family. In terms of assembly, homodimer.

Its subcellular location is the golgi apparatus membrane. It is found in the cytoplasmic vesicle membrane. It localises to the endoplasmic reticulum membrane. It carries out the reaction Zn(2+)(in) = Zn(2+)(out). In terms of biological role, functions as a zinc transporter transporting Zn(2+) from the Golgi apparatus to the cytosol and thus influences the zinc level at least in areas of the cytosol. May regulate beige adipocyte differentiation. This is Zinc transporter ZIP13 from Homo sapiens (Human).